A 426-amino-acid chain; its full sequence is Divalent metal cation transporter MntH (426 aa).

Helical transmembrane passes span 31 to 51 (WYLLGPAFVAAIAYVDPGNVA), 58 to 78 (AQFGYLQLWVVVVANVLAGLV), 134 to 156 (ILFRVSLLLGGVITGTVSLLLLM), 169 to 189 (VITGLLFVIVVGFTSSFFVAT), 208 to 228 (SVLLAAAIIGATVMPHAVYLH), 256 to 276 (VILAMTIAGIVNTAMLLVAAI), 298 to 318 (LGATIAMLFAIGLLASSLASA), 337 to 357 (IPMLIRRLITLCPAIAILALG), 363 to 383 (ALVLSQIVLSFGIPFAVLPLV), and 402 to 422 (TVLGWAVAILVSLLNVVLIYL).

It belongs to the NRAMP family.

It localises to the cell membrane. H(+)-stimulated, divalent metal cation uptake system. The protein is Divalent metal cation transporter MntH of Mycobacterium leprae (strain TN).